The chain runs to 427 residues: Inward rectifier potassium channel 2 (427 aa).

At 1-81 (MGSVRTNRYS…IFTTCVDIRW (81 aa)) the chain is on the cytoplasmic side. Cys76 is subject to S-nitrosocysteine. Residues 82–106 (RWMLVIFCLAFVLSWLFFGCVFWLI) traverse the membrane as a helical segment. Topologically, residues 107-128 (ALLHGDLDASKESKACVSEVNS) are extracellular. Residues 129-140 (FTAAFLFSIETQ) constitute an intramembrane region (helical; Pore-forming). Positions 141–147 (TTIGYGF) form an intramembrane region, pore-forming. Residues 142–147 (TIGYGF) carry the Selectivity filter motif. Residues 148-156 (RCVTDECPV) are Extracellular-facing. Residues 157 to 178 (AVFMVVFQSIVGCIIDAFIIGA) traverse the membrane as a helical segment. The Cytoplasmic segment spans residues 179–427 (VMAKMAKPKK…PRPLRRESEI (249 aa)). Positions 181 to 208 (AKMAKPKKRNETLVFSHNAVIAMRDGKL) are polyphosphoinositide (PIP2)-binding. The segment at 384–427 (SKEEDDSENGVPESTSTDTPPDIDLHNQASVPLEPRPLRRESEI) is disordered. The PDZ-binding motif lies at 425-427 (SEI).

It belongs to the inward rectifier-type potassium channel (TC 1.A.2.1) family. KCNJ2 subfamily. Homotetramer. Homomultimeric and heteromultimeric association with KCNJ4/Kir2.3. Can form heteromeric channels with Kir2.6/KCNJ18. Associates, via its PDZ-recognition domain, with a complex containing LIN7A, LIN7B, LIN7C, DLG1, CASK and APBA1. Post-translationally, S-nitrosylation increases the open probability and inward rectifying currents.

Its subcellular location is the cell membrane. It localises to the sarcolemma. The protein localises to the T-tubule. It catalyses the reaction K(+)(in) = K(+)(out). Activated by phosphatidylinositol 4,5 biphosphate (PtdIns(4,5)P2). Functionally, inward rectifier potassium channels are characterized by a greater tendency to allow potassium to flow into the cell rather than out of it. Their voltage dependence is regulated by the concentration of extracellular potassium; as external potassium is raised, the voltage range of the channel opening shifts to more positive voltages. The inward rectification is mainly due to the blockage of outward current by internal magnesium. Can be blocked by extracellular barium and cesium. Probably participates in establishing action potential waveform and excitability of neuronal and muscle tissues. The protein is Inward rectifier potassium channel 2 (KCNJ2) of Bos taurus (Bovine).